We begin with the raw amino-acid sequence, 107 residues long: Large ribosomal subunit protein eL33 (107 aa).

It belongs to the eukaryotic ribosomal protein eL33 family. As to quaternary structure, component of the large ribosomal subunit. Mature ribosomes consist of a small (40S) and a large (60S) subunit. The 40S subunit contains about 32 different proteins and 1 molecule of RNA (18S). The 60S subunit contains 45 different proteins and 3 molecules of RNA (25S, 5.8S and 5S).

Its subcellular location is the cytoplasm. Component of the ribosome, a large ribonucleoprotein complex responsible for the synthesis of proteins in the cell. The small ribosomal subunit (SSU) binds messenger RNAs (mRNAs) and translates the encoded message by selecting cognate aminoacyl-transfer RNA (tRNA) molecules. The large subunit (LSU) contains the ribosomal catalytic site termed the peptidyl transferase center (PTC), which catalyzes the formation of peptide bonds, thereby polymerizing the amino acids delivered by tRNAs into a polypeptide chain. The nascent polypeptides leave the ribosome through a tunnel in the LSU and interact with protein factors that function in enzymatic processing, targeting, and the membrane insertion of nascent chains at the exit of the ribosomal tunnel. The sequence is that of Large ribosomal subunit protein eL33 from Candida albicans (strain SC5314 / ATCC MYA-2876) (Yeast).